Reading from the N-terminus, the 300-residue chain is Acetylglutamate kinase (300 aa).

Substrate contacts are provided by residues 73–74 (GG), Arg-95, and Asn-197.

Belongs to the acetylglutamate kinase family. ArgB subfamily.

The protein resides in the cytoplasm. The catalysed reaction is N-acetyl-L-glutamate + ATP = N-acetyl-L-glutamyl 5-phosphate + ADP. Its pathway is amino-acid biosynthesis; L-arginine biosynthesis; N(2)-acetyl-L-ornithine from L-glutamate: step 2/4. In terms of biological role, catalyzes the ATP-dependent phosphorylation of N-acetyl-L-glutamate. The protein is Acetylglutamate kinase of Bordetella pertussis (strain Tohama I / ATCC BAA-589 / NCTC 13251).